We begin with the raw amino-acid sequence, 348 residues long: Probable tRNA pseudouridine synthase B (348 aa).

The Nucleophile role is filled by aspartate 93. Positions 260–335 constitute a PUA domain; that stretch reads LKKIYILDSA…IAVDIERVFM (76 aa).

It belongs to the pseudouridine synthase TruB family. Type 2 subfamily.

The catalysed reaction is uridine(55) in tRNA = pseudouridine(55) in tRNA. Functionally, could be responsible for synthesis of pseudouridine from uracil-55 in the psi GC loop of transfer RNAs. This chain is Probable tRNA pseudouridine synthase B, found in Nanoarchaeum equitans (strain Kin4-M).